Here is a 377-residue protein sequence, read N- to C-terminus: GDP-mannose 3,5-epimerase (377 aa).

N-acetylglycine is present on glycine 2. Residues 34–60 (GAGG…SDWK), aspartate 58, and aspartate 78 each bind NAD(+). Substrate contacts are provided by residues glycine 103 and 143–145 (SAC). NAD(+) contacts are provided by tyrosine 174 and lysine 178. Tyrosine 174 serves as the catalytic Proton acceptor. Substrate is bound by residues asparagine 203, 216-218 (EKA), lysine 225, 241-243 (QTR), arginine 306, and serine 356. Serine 369 is modified (phosphoserine).

Belongs to the NAD(P)-dependent epimerase/dehydratase family. In terms of assembly, homodimer. Interacts with chaperone Hsc70-3 protein, which may regulate epimerase activity. It depends on NAD(+) as a cofactor.

The enzyme catalyses GDP-alpha-D-mannose = GDP-beta-L-gulose. It catalyses the reaction GDP-beta-L-gulose = GDP-beta-L-galactose. Its pathway is cofactor biosynthesis; L-ascorbate biosynthesis via GDP-alpha-D-mannose pathway; L-ascorbate from GDP-alpha-D-mannose: step 1/5. With respect to regulation, inhibited by GDP and GDP-D-glucose. Functionally, catalyzes a reversible epimerization of GDP-D-mannose that precedes the committed step in the biosynthesis of vitamin C (L-ascorbate), resulting in the hydrolysis of the highly energetic glycosyl-pyrophosphoryl linkage. Able to catalyze 2 distinct epimerization reactions and can release both GDP-L-galactose and GDP-L-gulose from GDP-mannose. This is GDP-mannose 3,5-epimerase from Arabidopsis thaliana (Mouse-ear cress).